Here is a 569-residue protein sequence, read N- to C-terminus: Amyloid-beta A4 precursor protein-binding family A member 3 (569 aa).

An N-acetylmethionine modification is found at methionine 1. Disordered stretches follow at residues 1–53 and 124–168; these read MEFL…MELD and AQSV…SSPE. A compositionally biased stretch (basic and acidic residues) spans 19–32; sequence EEPKGPEVPSEDHP. Residues 132 to 141 are compositionally biased toward low complexity; sequence AQAAPRLLQP. Phosphoserine occurs at positions 166 and 367. The region spanning 212-376 is the PID domain; the sequence is DGVLFGAKYL…SASASHPHNG (165 aa). 2 PDZ domains span residues 389–475 and 480–554; these read EVCI…IIHC and TAVI…TMPA.

Binds to the cytoplasmic domain of amyloid protein (APP). Interacts with HIF1AN (via N-terminus). Interacts with NECAB3; seems to mediate the interaction between NECAB3 and HIF1AN. In terms of tissue distribution, ubiquitous.

Its subcellular location is the cytoplasm. It localises to the perinuclear region. In terms of biological role, may modulate processing of the amyloid-beta precursor protein (APP) and hence formation of APP-beta. May enhance the activity of HIF1A in macrophages by inhibiting the activity of HIF1AN. The sequence is that of Amyloid-beta A4 precursor protein-binding family A member 3 (Apba3) from Rattus norvegicus (Rat).